The chain runs to 330 residues: Ketol-acid reductoisomerase (NADP(+)) (330 aa).

In terms of domain architecture, KARI N-terminal Rossmann spans 1–181 (MKVLYDDDVN…GLTRAGVIET (181 aa)). Residues 24–27 (YGSQ), R47, S52, and 82–85 (DEIQ) contribute to the NADP(+) site. H107 is a catalytic residue. G133 provides a ligand contact to NADP(+). The 146-residue stretch at 182 to 327 (TYREETETDL…KNLRIACGLQ (146 aa)) folds into the KARI C-terminal knotted domain. Residues D190, E194, E226, and E230 each coordinate Mg(2+). Substrate is bound at residue S251.

This sequence belongs to the ketol-acid reductoisomerase family. The cofactor is Mg(2+).

The enzyme catalyses (2R)-2,3-dihydroxy-3-methylbutanoate + NADP(+) = (2S)-2-acetolactate + NADPH + H(+). It catalyses the reaction (2R,3R)-2,3-dihydroxy-3-methylpentanoate + NADP(+) = (S)-2-ethyl-2-hydroxy-3-oxobutanoate + NADPH + H(+). It participates in amino-acid biosynthesis; L-isoleucine biosynthesis; L-isoleucine from 2-oxobutanoate: step 2/4. Its pathway is amino-acid biosynthesis; L-valine biosynthesis; L-valine from pyruvate: step 2/4. Functionally, involved in the biosynthesis of branched-chain amino acids (BCAA). Catalyzes an alkyl-migration followed by a ketol-acid reduction of (S)-2-acetolactate (S2AL) to yield (R)-2,3-dihydroxy-isovalerate. In the isomerase reaction, S2AL is rearranged via a Mg-dependent methyl migration to produce 3-hydroxy-3-methyl-2-ketobutyrate (HMKB). In the reductase reaction, this 2-ketoacid undergoes a metal-dependent reduction by NADPH to yield (R)-2,3-dihydroxy-isovalerate. The protein is Ketol-acid reductoisomerase (NADP(+)) of Methanosphaera stadtmanae (strain ATCC 43021 / DSM 3091 / JCM 11832 / MCB-3).